A 416-amino-acid polypeptide reads, in one-letter code: Peptide chain release factor subunit 1 (416 aa).

Belongs to the eukaryotic release factor 1 family. As to quaternary structure, heterodimer of two subunits, one of which binds GTP.

It localises to the cytoplasm. In terms of biological role, directs the termination of nascent peptide synthesis (translation) in response to the termination codons UAA, UAG and UGA. The chain is Peptide chain release factor subunit 1 from Halobacterium salinarum (strain ATCC 29341 / DSM 671 / R1).